A 354-amino-acid polypeptide reads, in one-letter code: D-alanine--D-alanine ligase (354 aa).

Residues 140-344 (KRLLRDSGLS…ISTLLTRLIM (205 aa)) enclose the ATP-grasp domain. Residue 170–225 (ADMFGLPFFVKPVNQGSSIGVAKVNDDYSFHSALDIAFFYSHKIIIESCIAGRELE) participates in ATP binding. Mg(2+)-binding residues include aspartate 298, glutamate 311, and asparagine 313.

This sequence belongs to the D-alanine--D-alanine ligase family. It depends on Mg(2+) as a cofactor. Requires Mn(2+) as cofactor.

Its subcellular location is the cytoplasm. It catalyses the reaction 2 D-alanine + ATP = D-alanyl-D-alanine + ADP + phosphate + H(+). It functions in the pathway cell wall biogenesis; peptidoglycan biosynthesis. Functionally, cell wall formation. The polypeptide is D-alanine--D-alanine ligase (Blochmanniella floridana).